A 626-amino-acid chain; its full sequence is ATP-dependent zinc metalloprotease FtsH 3 (626 aa).

Residues 1-7 (MNKLFRS) lie on the Cytoplasmic side of the membrane. Residues 8 to 28 (LAFYMLILVISVAIAVQLGGT) traverse the membrane as a helical segment. Topologically, residues 29 to 103 (SQQTTQLVYS…LDFRQDNTSG (75 aa)) are extracellular. A helical transmembrane segment spans residues 104 to 124 (IWAMLLQTLVPVVLVLLAFFF). Over 125-626 (IMQQTQGSGN…GGTSQVAPAF (502 aa)) the chain is Cytoplasmic. Position 197–204 (197–204 (GPPGTGKT)) interacts with ATP. Residue His420 participates in Zn(2+) binding. Glu421 is an active-site residue. Residues His424 and Asp496 each contribute to the Zn(2+) site. The disordered stretch occupies residues 602-626 (PPRPKPEPLKPRMVGGGTSQVAPAF).

In the central section; belongs to the AAA ATPase family. This sequence in the C-terminal section; belongs to the peptidase M41 family. Homohexamer. Zn(2+) serves as cofactor.

It localises to the cell membrane. Acts as a processive, ATP-dependent zinc metallopeptidase for both cytoplasmic and membrane proteins. Plays a role in the quality control of integral membrane proteins. In Symbiobacterium thermophilum (strain DSM 24528 / JCM 14929 / IAM 14863 / T), this protein is ATP-dependent zinc metalloprotease FtsH 3.